A 946-amino-acid polypeptide reads, in one-letter code: Protein translocase subunit SecA (946 aa).

ATP-binding positions include Gln-87, 105–109, and Asp-524; that span reads GEGKT. Residues 905 to 926 form a disordered region; the sequence is APASDAAQRDPKNPASWGKIGR. Residues Cys-930, Cys-932, Cys-941, and His-942 each contribute to the Zn(2+) site.

This sequence belongs to the SecA family. As to quaternary structure, monomer and homodimer. Part of the essential Sec protein translocation apparatus which comprises SecA, SecYEG and auxiliary proteins SecDF-YajC and YidC. Requires Zn(2+) as cofactor.

It localises to the cell inner membrane. It is found in the cytoplasm. It catalyses the reaction ATP + H2O + cellular proteinSide 1 = ADP + phosphate + cellular proteinSide 2.. In terms of biological role, part of the Sec protein translocase complex. Interacts with the SecYEG preprotein conducting channel. Has a central role in coupling the hydrolysis of ATP to the transfer of proteins into and across the cell membrane, serving both as a receptor for the preprotein-SecB complex and as an ATP-driven molecular motor driving the stepwise translocation of polypeptide chains across the membrane. This is Protein translocase subunit SecA from Bradyrhizobium diazoefficiens (strain JCM 10833 / BCRC 13528 / IAM 13628 / NBRC 14792 / USDA 110).